Consider the following 710-residue polypeptide: Integrator complex subunit 10 (710 aa).

Residues 366–393 (IHKKRKLAEGREKTMSSDDEDPSGKARS) form a disordered region. Over residues 372 to 381 (LAEGREKTMS) the composition is skewed to basic and acidic residues.

The protein belongs to the Integrator subunit 10 family. In terms of assembly, component of the Integrator complex, composed of core subunits INTS1, INTS2, INTS3, INTS4, INTS5, INTS6, INTS7, INTS8, INTS9/RC74, INTS10, INTS11/CPSF3L, INTS12, INTS13, INTS14 and INTS15. The core complex associates with protein phosphatase 2A subunits PPP2CA and PPP2R1A, to form the Integrator-PP2A (INTAC) complex. INTS10 is part of the tail subcomplex, composed of INTS10, INTS13, INTS14 and INTS15.

Its subcellular location is the nucleus. Functionally, component of the integrator complex, a multiprotein complex that terminates RNA polymerase II (Pol II) transcription in the promoter-proximal region of genes. The integrator complex provides a quality checkpoint during transcription elongation by driving premature transcription termination of transcripts that are unfavorably configured for transcriptional elongation: the complex terminates transcription by (1) catalyzing dephosphorylation of the C-terminal domain (CTD) of Pol II subunit POLR2A/RPB1 and SUPT5H/SPT5, (2) degrading the exiting nascent RNA transcript via endonuclease activity and (3) promoting the release of Pol II from bound DNA. The integrator complex is also involved in terminating the synthesis of non-coding Pol II transcripts, such as enhancer RNAs (eRNAs), small nuclear RNAs (snRNAs), telomerase RNAs and long non-coding RNAs (lncRNAs). This is Integrator complex subunit 10 (INTS10) from Gallus gallus (Chicken).